The primary structure comprises 112 residues: Protein Churchill (112 aa).

Zn(2+) is bound by residues Cys-2, Cys-5, Cys-30, Cys-33, His-59, Cys-61, Cys-64, His-66, His-71, Cys-88, and Cys-91.

The protein belongs to the Churchill family.

Transcriptional activator that mediates FGF signaling during neural development. Plays a role in the regulation of cell movement. Functionally, does not bind DNA by itself. In Homo sapiens (Human), this protein is Protein Churchill (CHURC1).